Here is a 232-residue protein sequence, read N- to C-terminus: Flagellar L-ring protein (232 aa).

The N-terminal stretch at 1 to 21 is a signal peptide; the sequence is MQKNAAHTYAISSLLVLSLTG. The N-palmitoyl cysteine moiety is linked to residue Cys22. Cys22 carries S-diacylglycerol cysteine lipidation.

Belongs to the FlgH family. In terms of assembly, the basal body constitutes a major portion of the flagellar organelle and consists of four rings (L,P,S, and M) mounted on a central rod.

The protein resides in the cell outer membrane. It is found in the bacterial flagellum basal body. In terms of biological role, assembles around the rod to form the L-ring and probably protects the motor/basal body from shearing forces during rotation. This Escherichia coli O6:H1 (strain CFT073 / ATCC 700928 / UPEC) protein is Flagellar L-ring protein.